The chain runs to 533 residues: V(D)J recombination-activating protein 2 (533 aa).

Residues 358–413 (KGEDGNQVCSQESTDFEDSAPLEDSEELYFGREPHELEDSSEGEGDTYNEEDEEDE) are disordered. Acidic residues predominate over residues 371–384 (TDFEDSAPLEDSEE). Basic and acidic residues predominate over residues 386–395 (YFGREPHELE). Over residues 396 to 413 (DSSEGEGDTYNEEDEEDE) the composition is skewed to acidic residues. The PHD-type; atypical zinc finger occupies 419–488 (WVKCCLGCQV…KYFCLDHGGL (70 aa)). The Zn(2+) site is built by C422, C426, C449, H456, H459, C462, C482, and H485. The segment at 496 to 517 (PRQVLSLKRSPMKPQHRKGPMM) is disordered. Positions 505-517 (SPMKPQHRKGPMM) are enriched in basic residues.

This sequence belongs to the RAG2 family. Component of the RAG complex composed of core components rag1 and rag2.

The protein localises to the nucleus. Core component of the RAG complex, a multiprotein complex that mediates the DNA cleavage phase during V(D)J recombination. V(D)J recombination assembles a diverse repertoire of immunoglobulin and T-cell receptor genes in developing B and T lymphocytes through rearrangement of different V (variable), in some cases D (diversity), and J (joining) gene segments. DNA cleavage by the RAG complex occurs in 2 steps: a first nick is introduced in the top strand immediately upstream of the heptamer, generating a 3'-hydroxyl group that can attack the phosphodiester bond on the opposite strand in a direct transesterification reaction, thereby creating 4 DNA ends: 2 hairpin coding ends and 2 blunt, 5'-phosphorylated ends. In the RAG complex, rag2 is not the catalytic component but is required for all known catalytic activities mediated by RAG1. It probably acts as a sensor of chromatin state that recruits the RAG complex to H3K4me3. This chain is V(D)J recombination-activating protein 2 (rag2), found in Oncorhynchus mykiss (Rainbow trout).